The following is a 188-amino-acid chain: Threonylcarbamoyl-AMP synthase (188 aa).

The YrdC-like domain maps to 8–188 (EGAQPGLHAY…DLATGKILRA (181 aa)).

This sequence belongs to the SUA5 family. TsaC subfamily.

It localises to the cytoplasm. The catalysed reaction is L-threonine + hydrogencarbonate + ATP = L-threonylcarbamoyladenylate + diphosphate + H2O. Required for the formation of a threonylcarbamoyl group on adenosine at position 37 (t(6)A37) in tRNAs that read codons beginning with adenine. Catalyzes the conversion of L-threonine, HCO(3)(-)/CO(2) and ATP to give threonylcarbamoyl-AMP (TC-AMP) as the acyladenylate intermediate, with the release of diphosphate. The polypeptide is Threonylcarbamoyl-AMP synthase (Thiobacillus denitrificans (strain ATCC 25259 / T1)).